The primary structure comprises 569 residues: Urease subunit alpha (569 aa).

The Urease domain occupies G131 to L569. Residues H136, H138, and K219 each contribute to the Ni(2+) site. K219 is subject to N6-carboxylysine. H221 serves as a coordination point for substrate. Residues H248 and H274 each coordinate Ni(2+). Catalysis depends on H322, which acts as the Proton donor. D362 serves as a coordination point for Ni(2+).

The protein belongs to the metallo-dependent hydrolases superfamily. Urease alpha subunit family. Heterotrimer of UreA (gamma), UreB (beta) and UreC (alpha) subunits. Three heterotrimers associate to form the active enzyme. It depends on Ni cation as a cofactor. In terms of processing, carboxylation allows a single lysine to coordinate two nickel ions.

Its subcellular location is the cytoplasm. It carries out the reaction urea + 2 H2O + H(+) = hydrogencarbonate + 2 NH4(+). Its pathway is nitrogen metabolism; urea degradation; CO(2) and NH(3) from urea (urease route): step 1/1. The sequence is that of Urease subunit alpha from Parasynechococcus marenigrum (strain WH8102).